Consider the following 603-residue polypeptide: Terpenoid synthase 22 (603 aa).

Mg(2+) is bound by residues Asp356, Asp360, Asn500, and Glu508. The DDXXD motif signature appears at 356 to 360 (DDTCD).

It belongs to the terpene synthase family. Tpsa subfamily. Mg(2+) serves as cofactor. It depends on Mn(2+) as a cofactor. In terms of tissue distribution, predominantly expressed in siliques but also in flowers.

Its subcellular location is the cytoplasm. Its pathway is secondary metabolite biosynthesis; terpenoid biosynthesis. Functionally, involved in terpene biosynthesis in roots. Possesses sesquiterpene (C15) synthase activity in vitro. Does not seem to be involved in diterpene (C20) biosynthesis. The protein is Terpenoid synthase 22 of Arabidopsis thaliana (Mouse-ear cress).